We begin with the raw amino-acid sequence, 510 residues long: Cytochrome P450 703A2 (510 aa).

Residues 2-22 (ILVLASLFAVLILNVLLWRWL) form a helical membrane-spanning segment. Cysteine 451 serves as a coordination point for heme.

It belongs to the cytochrome P450 family. Requires heme as cofactor.

It is found in the membrane. It catalyses the reaction dodecanoate + reduced [NADPH--hemoprotein reductase] + O2 = 7-hydroxydodecanoate + oxidized [NADPH--hemoprotein reductase] + H2O + H(+). Functionally, involved in pollen wall development. Catalyzes the conversion of medium-chain saturated fatty acids to the corresponding monohydroxylated fatty acids, with a preferential hydroxylation of lauric acid at the C-7 position. In-chain hydroxylated fatty acids, together with omega-hydroxylated fatty acids, are key monomeric aliphatic building blocks for sporopollenin synthesis during exine formation. The chain is Cytochrome P450 703A2 from Arabidopsis thaliana (Mouse-ear cress).